Here is a 676-residue protein sequence, read N- to C-terminus: Portal protein (676 aa).

The tract at residues 383-404 (PGFGKGGNSRGSAGQDQGGRAP) is disordered. Residues 422 to 443 (LEGYINNLFGTIERLRETNAGL) form a putative leucine zipper motif region. The interval 627–676 (PPPSPVGADFRPGASPRGRSRSRSPGRTARGAPDQGGGIGHRDGRRDGRR) is disordered. Positions 666–676 (GHRDGRRDGRR) are enriched in basic and acidic residues.

It belongs to the herpesviridae portal protein family. As to quaternary structure, homododecamerizes. Interacts with terminase subunits TRM1 and TRM3.

The protein localises to the virion. It localises to the host nucleus. Its function is as follows. Forms a portal in the viral capsid through which viral DNA is translocated during DNA packaging. Assembles as a dodecamer at a single fivefold axe of the T=16 icosahedric capsid. Binds to the molecular motor that translocates the viral DNA, termed terminase. The protein is Portal protein (UL6) of Human herpesvirus 1 (strain 17) (HHV-1).